A 253-amino-acid chain; its full sequence is Chitooligosaccharide deacetylase (253 aa).

Positions 61 and 126 each coordinate Mg(2+).

The protein belongs to the YdjC deacetylase family. ChbG subfamily. Homodimer. The cofactor is Mg(2+).

The protein resides in the cytoplasm. The enzyme catalyses N,N'-diacetylchitobiose + H2O = N-acetyl-beta-D-glucosaminyl-(1-&gt;4)-D-glucosamine + acetate. It catalyses the reaction diacetylchitobiose-6'-phosphate + H2O = N'-monoacetylchitobiose-6'-phosphate + acetate. It participates in glycan degradation; chitin degradation. Involved in the degradation of chitin. ChbG is essential for growth on the acetylated chitooligosaccharides chitobiose and chitotriose but is dispensable for growth on cellobiose and chitosan dimer, the deacetylated form of chitobiose. Deacetylation of chitobiose-6-P and chitotriose-6-P is necessary for both the activation of the chb promoter by the regulatory protein ChbR and the hydrolysis of phosphorylated beta-glucosides by the phospho-beta-glucosidase ChbF. Catalyzes the removal of only one acetyl group from chitobiose-6-P to yield monoacetylchitobiose-6-P, the inducer of ChbR and the substrate of ChbF. The sequence is that of Chitooligosaccharide deacetylase from Yersinia enterocolitica serotype O:8 / biotype 1B (strain NCTC 13174 / 8081).